Reading from the N-terminus, the 402-residue chain is APO protein 3, mitochondrial (402 aa).

The transit peptide at 1–13 (MQRRKLVEISIFV) directs the protein to the mitochondrion. The disordered stretch occupies residues 37-59 (NDEDPLYADVPKPPKDKSERKPY). Residues 48–58 (KPPKDKSERKP) show a composition bias toward basic and acidic residues. APO domains lie at 127 to 213 (RCRL…DLEK) and 294 to 380 (TCGY…PVPD).

It belongs to the APO family.

The protein localises to the mitochondrion. In terms of biological role, may be involved in the stable assembly of several 4Fe-4S cluster-containing complexes of mitochondria. In Arabidopsis thaliana (Mouse-ear cress), this protein is APO protein 3, mitochondrial (APO3).